The primary structure comprises 370 residues: Type II restriction enzyme MjaII (370 aa).

The protein belongs to the TdeIII type II restriction endonuclease family.

It carries out the reaction Endonucleolytic cleavage of DNA to give specific double-stranded fragments with terminal 5'-phosphates.. Functionally, a P subtype restriction enzyme that recognizes the double-stranded sequence 5'-GGNCC-3'; the cleavage site is unknown. The sequence is that of Type II restriction enzyme MjaII (mjaIIR) from Methanocaldococcus jannaschii (strain ATCC 43067 / DSM 2661 / JAL-1 / JCM 10045 / NBRC 100440) (Methanococcus jannaschii).